The chain runs to 322 residues: Cysteine protease YopT (322 aa).

Residues 43-72 form a disordered region; sequence SHSNRQKKLSATIKHNQSSRSMLDRKLTSD. Residues cysteine 139, histidine 258, and aspartate 274 contribute to the active site.

This sequence belongs to the peptidase C58 family. In terms of assembly, interacts with human ARHA.

Its subcellular location is the secreted. In terms of biological role, cysteine protease, which is translocated into infected cells and plays a central role in pathogenesis by cleaving the C-terminus end of the human small GTPase RhoA/ARHA, a regulator of cytoskeleton. Once cleaved, ARHA loses its lipid modification, and is released from the cell membrane, leading to the subsequent disruption of actin cytoskeleton of the host cell. In Yersinia enterocolitica, this protein is Cysteine protease YopT (yopT).